The sequence spans 554 residues: uncharacterized protein (554 aa).

Disordered regions lie at residues 1–127 (MTTH…NYND), 139–173 (IEDD…SKAG), 293–395 (NNNN…PLSE), and 416–509 (FGFS…RKIR). Low complexity-rich tracts occupy residues 9–30 (SSSN…NNNI), 46–55 (DPTSSSSPTN), and 63–125 (SNSN…LINY). The span at 139–153 (IEDDEEYEEIGDEES) shows a compositional bias: acidic residues. Residues 164–173 (NDSLNGSKAG) are compositionally biased toward polar residues. 3 stretches are compositionally biased toward low complexity: residues 293–387 (NNNN…CSSN), 416–449 (FGFS…SSIS), and 461–484 (SPPL…NNNH). Positions 485 to 508 (HNNHHQNHHHQNHNHQHHSKKRKI) are enriched in basic residues.

This is an uncharacterized protein from Dictyostelium discoideum (Social amoeba).